The primary structure comprises 579 residues: YTH domain-containing family protein 2 (579 aa).

The interval 1 to 45 (MSASSLLEQRPKGQGNKVQNGSVHQKDGLNDDDFEPYLSPQARPN) is disordered. Serine 2 is subject to N-acetylserine. Phosphoserine occurs at positions 2, 4, 5, 22, 39, and 196. The interval 2–384 (SASSLLEQRP…QAGSGSTPSE (383 aa)) is localization to mRNA processing bodies (P-bodies). The tract at residues 247–387 (AKQQPKLKTK…SGSTPSEPHP (141 aa)) is disordered. The segment covering 291 to 316 (ALVQNIGQPTQGSPQPVGQQANNSPP) has biased composition (polar residues). Residues 337-349 (AQLSVQQQAAQPT) show a composition bias toward low complexity. The residue at position 359 (serine 359) is a Phosphoserine. A compositionally biased stretch (gly residues) spans 359–371 (SGFGHNGVDGNGV). The segment covering 372–383 (GQSQAGSGSTPS) has biased composition (polar residues). Positions 385–579 (PHPVLEKLRS…VKKERQGRGK (195 aa)) are interaction with m6A-containing mRNAs. Serine 394 is modified (phosphoserine). A YTH domain is found at 410–544 (GRVFIIKSYS…EKAKQVLKII (135 aa)). RNA-binding positions include 416 to 418 (KSY), aspartate 422, 432 to 433 (WC), asparagine 462, tryptophan 486, and tryptophan 491.

The protein belongs to the YTHDF family. YTHDF2 subfamily. Interacts with CNOT1; interaction is direct and promotes recruitment of the CCR4-NOT complex. Interacts with YTHDF3. Interacts with RIDA/HRSP12; interaction leads to recruitment of the ribonuclease P/MRP complex. Ubiquitinated by the SCF(SKP2) complex, leading to its degradation. Widely expressed, with highest expression in testis.

It is found in the cytoplasm. The protein resides in the cytosol. The protein localises to the P-body. Its subcellular location is the stress granule. It localises to the nucleus. Specifically recognizes and binds N6-methyladenosine (m6A)-containing RNAs, and regulates their stability. M6A is a modification present at internal sites of mRNAs and some non-coding RNAs and plays a role in mRNA stability and processing. Acts as a regulator of mRNA stability by promoting degradation of m6A-containing mRNAs via interaction with the CCR4-NOT and ribonuclease P/MRP complexes, depending on the context. The YTHDF paralogs (YTHDF1, YTHDF2 and YTHDF3) share m6A-containing mRNAs targets and act redundantly to mediate mRNA degradation and cellular differentiation. M6A-containing mRNAs containing a binding site for RIDA/HRSP12 (5'-GGUUC-3') are preferentially degraded by endoribonucleolytic cleavage: cooperative binding of RIDA/HRSP12 and YTHDF2 to transcripts leads to recruitment of the ribonuclease P/MRP complex. Other m6A-containing mRNAs undergo deadenylation via direct interaction between YTHDF2 and CNOT1, leading to recruitment of the CCR4-NOT and subsequent deadenylation of m6A-containing mRNAs. Required maternally to regulate oocyte maturation: probably acts by binding to m6A-containing mRNAs, thereby regulating maternal transcript dosage during oocyte maturation, which is essential for the competence of oocytes to sustain early zygotic development. Also required during spermatogenesis: regulates spermagonial adhesion by promoting degradation of m6A-containing transcripts coding for matrix metallopeptidases. Also involved in hematopoietic stem cells specification by binding to m6A-containing mRNAs, leading to promote their degradation. Also acts as a regulator of neural development by promoting m6A-dependent degradation of neural development-related mRNA targets. Inhibits neural specification of induced pluripotent stem cells by binding to methylated neural-specific mRNAs and promoting their degradation, thereby restraining neural differentiation. Regulates circadian regulation of hepatic lipid metabolism: acts by promoting m6A-dependent degradation of PPARA transcripts. Regulates the innate immune response to infection by inhibiting the type I interferon response: acts by binding to m6A-containing IFNB transcripts and promoting their degradation. May also act as a promoter of cap-independent mRNA translation following heat shock stress: upon stress, relocalizes to the nucleus and specifically binds mRNAs with some m6A methylation mark at their 5'-UTR, protecting demethylation of mRNAs by FTO, thereby promoting cap-independent mRNA translation. Regulates mitotic entry by promoting the phase-specific m6A-dependent degradation of WEE1 transcripts. Promotes formation of phase-separated membraneless compartments, such as P-bodies or stress granules, by undergoing liquid-liquid phase separation upon binding to mRNAs containing multiple m6A-modified residues: polymethylated mRNAs act as a multivalent scaffold for the binding of YTHDF proteins, juxtaposing their disordered regions and thereby leading to phase separation. The resulting mRNA-YTHDF complexes then partition into different endogenous phase-separated membraneless compartments, such as P-bodies, stress granules or neuronal RNA granules. May also recognize and bind RNAs modified by C5-methylcytosine (m5C) and act as a regulator of rRNA processing. The sequence is that of YTH domain-containing family protein 2 from Mus musculus (Mouse).